Reading from the N-terminus, the 321-residue chain is GDP-L-fucose synthase (321 aa).

NADP(+) contacts are provided by residues 10–16 (GHRGMVG), 36–41 (RDELNL), and 105–108 (LGSS). Residue tyrosine 136 is the Proton donor/acceptor of the active site. NADP(+)-binding positions include lysine 140, 163–166 (PTNL), and histidine 179. 4 residues coordinate substrate: arginine 187, tryptophan 202, arginine 209, and aspartate 278.

This sequence belongs to the NAD(P)-dependent epimerase/dehydratase family. Fucose synthase subfamily. Homodimer.

Its subcellular location is the cytoplasm. The enzyme catalyses GDP-beta-L-fucose + NADP(+) = GDP-4-dehydro-alpha-D-rhamnose + NADPH + H(+). It participates in nucleotide-sugar biosynthesis; GDP-L-fucose biosynthesis via de novo pathway; GDP-L-fucose from GDP-alpha-D-mannose: step 2/2. Its pathway is exopolysaccharide biosynthesis; colanic acid biosynthesis. Its activity is regulated as follows. Subject to product inhibition by NADP and GDP-fucose. Catalyzes the two-step NADP-dependent conversion of GDP-4-dehydro-6-deoxy-D-mannose to GDP-fucose, involving an epimerase and a reductase reaction. The sequence is that of GDP-L-fucose synthase from Escherichia coli (strain K12).